A 432-amino-acid chain; its full sequence is 23S rRNA (uracil(1939)-C(5))-methyltransferase RlmD (432 aa).

The TRAM domain occupies M1–A54. [4Fe-4S] cluster is bound by residues C67, C73, C76, and C155. 6 residues coordinate S-adenosyl-L-methionine: Q264, F293, N298, E314, N341, and D362. The Nucleophile role is filled by C389.

It belongs to the class I-like SAM-binding methyltransferase superfamily. RNA M5U methyltransferase family. RlmD subfamily.

The catalysed reaction is uridine(1939) in 23S rRNA + S-adenosyl-L-methionine = 5-methyluridine(1939) in 23S rRNA + S-adenosyl-L-homocysteine + H(+). Its function is as follows. Catalyzes the formation of 5-methyl-uridine at position 1939 (m5U1939) in 23S rRNA. The protein is 23S rRNA (uracil(1939)-C(5))-methyltransferase RlmD of Thiobacillus denitrificans (strain ATCC 25259 / T1).